The chain runs to 343 residues: Cell division protein ZipA (343 aa).

The Periplasmic portion of the chain corresponds to 1–4; sequence MDLN. A helical membrane pass occupies residues 5 to 25; that stretch reads TILIILGILALIGLVAHGIWS. The Cytoplasmic portion of the chain corresponds to 26–343; it reads NRREKSQYFD…MAEAAYLARV (318 aa). The interval 39–98 is disordered; sequence AFHRNPQSTGRPSAQASQPMTPNFAQPAKETEQIRQTYQEPQVRQMSSSPEQQTRPTAQA. Polar residues-rich tracts occupy residues 43-62 and 72-95; these read NPQS…TPNF and IRQT…TRPT.

The protein belongs to the ZipA family. Interacts with FtsZ via their C-terminal domains.

It is found in the cell inner membrane. Its function is as follows. Essential cell division protein that stabilizes the FtsZ protofilaments by cross-linking them and that serves as a cytoplasmic membrane anchor for the Z ring. Also required for the recruitment to the septal ring of downstream cell division proteins. The protein is Cell division protein ZipA of Actinobacillus succinogenes (strain ATCC 55618 / DSM 22257 / CCUG 43843 / 130Z).